Reading from the N-terminus, the 62-residue chain is DNA-directed RNA polymerase subunit Rpo10 (62 aa).

Cysteine 6, cysteine 9, cysteine 43, and cysteine 44 together coordinate Zn(2+).

Belongs to the archaeal Rpo10/eukaryotic RPB10 RNA polymerase subunit family. In terms of assembly, part of the RNA polymerase complex. Requires Zn(2+) as cofactor.

Its subcellular location is the cytoplasm. The catalysed reaction is RNA(n) + a ribonucleoside 5'-triphosphate = RNA(n+1) + diphosphate. Its function is as follows. DNA-dependent RNA polymerase (RNAP) catalyzes the transcription of DNA into RNA using the four ribonucleoside triphosphates as substrates. This is DNA-directed RNA polymerase subunit Rpo10 from Methanosarcina barkeri (strain Fusaro / DSM 804).